Consider the following 257-residue polypeptide: UPF0246 protein Spro_0686 (257 aa).

The protein belongs to the UPF0246 family.

The protein is UPF0246 protein Spro_0686 of Serratia proteamaculans (strain 568).